Here is a 208-residue protein sequence, read N- to C-terminus: Uracil phosphoribosyltransferase (208 aa).

5-phospho-alpha-D-ribose 1-diphosphate-binding positions include Arg78, Arg103, and Asp130–Ser138. Residues Ile193 and Gly198–Ala200 contribute to the uracil site. 5-phospho-alpha-D-ribose 1-diphosphate is bound at residue Asp199.

This sequence belongs to the UPRTase family. Mg(2+) serves as cofactor.

It catalyses the reaction UMP + diphosphate = 5-phospho-alpha-D-ribose 1-diphosphate + uracil. It functions in the pathway pyrimidine metabolism; UMP biosynthesis via salvage pathway; UMP from uracil: step 1/1. With respect to regulation, allosterically activated by GTP. In terms of biological role, catalyzes the conversion of uracil and 5-phospho-alpha-D-ribose 1-diphosphate (PRPP) to UMP and diphosphate. In Aliivibrio salmonicida (strain LFI1238) (Vibrio salmonicida (strain LFI1238)), this protein is Uracil phosphoribosyltransferase.